Reading from the N-terminus, the 466-residue chain is Putative multidrug resistance protein MdtD (466 aa).

Transmembrane regions (helical) follow at residues 11–31 (LWIV…VNTA), 48–68 (SVIV…GWLA), 71–91 (IGVK…SLLC), 105–125 (VIQG…VMKI), 137–157 (FVTL…GFLV), 164–184 (WIFL…WFLM), 194–214 (FDIS…LALD), 218–238 (SLGI…IALL), 262–282 (FSIG…LPFM), 292–312 (GFSP…SMGI), 328–347 (VLVA…ALVA), 351–370 (WIWM…AIRF), 402–422 (SLGV…HIAA), and 429–449 (TVFL…ALIF).

This sequence belongs to the major facilitator superfamily. TCR/Tet family.

It is found in the cell inner membrane. The polypeptide is Putative multidrug resistance protein MdtD (Pectobacterium atrosepticum (strain SCRI 1043 / ATCC BAA-672) (Erwinia carotovora subsp. atroseptica)).